Consider the following 59-residue polypeptide: U-actitoxin-Aer2b (59 aa).

Contains 5 disulfide bonds.

It is found in the secreted. Its subcellular location is the nematocyst. The chain is U-actitoxin-Aer2b from Anemonia erythraea (Sea anemone).